Reading from the N-terminus, the 135-residue chain is Serine protease inhibitor swm-1 (135 aa).

Positions 1–16 (MRILVIITCIVAVATA) are cleaved as a signal peptide. 10 disulfide bridges follow: Cys-20/Cys-53, Cys-29/Cys-48, Cys-33/Cys-44, Cys-37/Cys-73, Cys-55/Cys-67, Cys-80/Cys-114, Cys-89/Cys-109, Cys-93/Cys-105, Cys-97/Cys-133, and Cys-116/Cys-127. TIL domains are found at residues 20-73 (CEAN…VSEC) and 80-133 (CPEN…KKDC). A glycan (N-linked (GlcNAc...) asparagine) is linked at Asn-83.

In terms of tissue distribution, in male, expressed in the vas deferens cuboidal cells and, in posterior body wall and male-specific diagonal muscles. In hermaphrodites, expressed in posterior body wall muscles and spermatheca.

The protein localises to the secreted. Its subcellular location is the cytoplasmic vesicle. It localises to the secretory vesicle lumen. Functionally, serine protease inhibitor. Probably by inhibiting serine protease tyr-5 in males, prevents the maturation of spermatids into mature motile spermatozoa until their transfer into a hermaphrodite. Also required for efficient sperm transfer and thus for male fertility. The protein is Serine protease inhibitor swm-1 of Caenorhabditis elegans.